A 294-amino-acid polypeptide reads, in one-letter code: ATP synthase gamma chain (294 aa).

The protein belongs to the ATPase gamma chain family. In terms of assembly, F-type ATPases have 2 components, CF(1) - the catalytic core - and CF(0) - the membrane proton channel. CF(1) has five subunits: alpha(3), beta(3), gamma(1), delta(1), epsilon(1). CF(0) has three main subunits: a, b and c.

The protein resides in the cell inner membrane. In terms of biological role, produces ATP from ADP in the presence of a proton gradient across the membrane. The gamma chain is believed to be important in regulating ATPase activity and the flow of protons through the CF(0) complex. The polypeptide is ATP synthase gamma chain (Mesorhizobium japonicum (strain LMG 29417 / CECT 9101 / MAFF 303099) (Mesorhizobium loti (strain MAFF 303099))).